Consider the following 545-residue polypeptide: 4-coumarate--CoA ligase 2 (545 aa).

ATP is bound by residues Ser-192, Ser-193, Gly-194, Thr-195, Thr-196, and Lys-200. (E)-4-coumaroyl-AMP contacts are provided by Tyr-242 and Ser-246. Residue Lys-263 participates in CoA binding. The segment at 265–334 (DIAQFLELIP…AKFPNAKLGQ (70 aa)) is SBD1. Positions 312, 334, 335, 339, and 347 each coordinate (E)-4-coumaroyl-AMP. Positions 334, 335, and 339 each coordinate ATP. An SBD2 region spans residues 335–402 (GYGMTEAGPV…IRGDQIMKGY (68 aa)). 2 residues coordinate ATP: Asp-423 and Arg-438. The (E)-4-coumaroyl-AMP site is built by Lys-440 and Lys-444. 2 residues coordinate CoA: Lys-446 and Gly-447. Lys-529 contacts ATP.

This sequence belongs to the ATP-dependent AMP-binding enzyme family. Mg(2+) is required as a cofactor.

The catalysed reaction is (E)-4-coumarate + ATP + CoA = (E)-4-coumaroyl-CoA + AMP + diphosphate. The enzyme catalyses (E)-4-coumarate + ATP + H(+) = (E)-4-coumaroyl-AMP + diphosphate. It carries out the reaction (E)-4-coumaroyl-AMP + CoA = (E)-4-coumaroyl-CoA + AMP + H(+). The protein operates within phytoalexin biosynthesis; 3,4',5-trihydroxystilbene biosynthesis; 3,4',5-trihydroxystilbene from trans-4-coumarate: step 1/2. In terms of biological role, carboxylate--CoA ligase that may use 4-coumarate as substrate. Follows a two-step reaction mechanism, wherein the carboxylate substrate first undergoes adenylation by ATP, followed by a thioesterification in the presence of CoA to yield the final CoA thioester. In Solanum tuberosum (Potato), this protein is 4-coumarate--CoA ligase 2 (4CL2).